Here is a 96-residue protein sequence, read N- to C-terminus: Large ribosomal subunit protein eL43 (96 aa).

Residues 39 to 60 (CTFCGKTATKRTCVGIWKCKKC) form a C4-type zinc finger.

This sequence belongs to the eukaryotic ribosomal protein eL43 family. In terms of assembly, component of the large ribosomal subunit. Mature ribosomes consist of a small (40S) and a large (60S) subunit. The 40S subunit contains about 32 different proteins and 1 molecule of RNA (18S). The 60S subunit contains about 42 different proteins and 3 molecules of RNA (28S, 5.8S and 5S).

Its subcellular location is the cytoplasm. In terms of biological role, component of the ribosome, a large ribonucleoprotein complex responsible for the synthesis of proteins in the cell. The small ribosomal subunit (SSU) binds messenger RNAs (mRNAs) and translates the encoded message by selecting cognate aminoacyl-transfer RNA (tRNA) molecules. The large subunit (LSU) contains the ribosomal catalytic site termed the peptidyl transferase center (PTC), which catalyzes the formation of peptide bonds, thereby polymerizing the amino acids delivered by tRNAs into a polypeptide chain. The nascent polypeptides leave the ribosome through a tunnel in the LSU and interact with protein factors that function in enzymatic processing, targeting, and the membrane insertion of nascent chains at the exit of the ribosomal tunnel. The polypeptide is Large ribosomal subunit protein eL43 (Plasmodium falciparum (isolate 3D7)).